Reading from the N-terminus, the 220-residue chain is Charged multivesicular body protein 3 (220 aa).

Gly-2 carries the N-myristoyl glycine lipid modification. The stretch at 22 to 54 (KIRKEMRVIDRQIRDIQREQEKVKRSIKESAKK) forms a coiled coil. Residues 168–169 (IL) are important for autoinhibitory function. Positions 196–220 (AMAASDEEEEEDLEAMQSRLAALRS) are disordered. Residues 197–220 (MAASDEEEEEDLEAMQSRLAALRS) are a coiled coil. Positions 200-209 (SDEEEEEDLE) are enriched in acidic residues. Positions 201–209 (DEEEEEDLE) match the MIT-interacting motif motif. Interaction with STAMBP regions lie at residues 203-207 (EEEED) and 219-220 (RS).

This sequence belongs to the SNF7 family. Probable core component of the endosomal sorting required for transport complex III (ESCRT-III). ESCRT-III components are thought to multimerize to form a flat lattice on the perimeter membrane of the endosome. Several assembly forms of ESCRT-III may exist that interact and act sequentially.

The protein resides in the cytoplasm. Its subcellular location is the cytosol. The protein localises to the membrane. It is found in the endosome. It localises to the late endosome membrane. Functionally, probable core component of the endosomal sorting required for transport complex III (ESCRT-III) which is involved in multivesicular bodies (MVBs) formation and sorting of endosomal cargo proteins into MVBs. MVBs contain intraluminal vesicles (ILVs) that are generated by invagination and scission from the limiting membrane of the endosome and mostly are delivered to lysosomes enabling degradation of membrane proteins, such as stimulated growth factor receptors, lysosomal enzymes and lipids. Involved in late stages of cytokinesis. Plays a role in endosomal sorting/trafficking of EGF receptor. This chain is Charged multivesicular body protein 3 (chmp3), found in Xenopus tropicalis (Western clawed frog).